We begin with the raw amino-acid sequence, 513 residues long: 2-isopropylmalate synthase (513 aa).

Positions 5–268 (LIIFDTTLRD…EVGIDTTQIV (264 aa)) constitute a Pyruvate carboxyltransferase domain. Residues Asp-14, His-202, His-204, and Asn-239 each contribute to the Mn(2+) site. The interval 394 to 513 (RLLSLEQQSA…SKNERVAAQG (120 aa)) is regulatory domain.

It belongs to the alpha-IPM synthase/homocitrate synthase family. LeuA type 1 subfamily. As to quaternary structure, homodimer. The cofactor is Mn(2+).

It is found in the cytoplasm. The catalysed reaction is 3-methyl-2-oxobutanoate + acetyl-CoA + H2O = (2S)-2-isopropylmalate + CoA + H(+). It functions in the pathway amino-acid biosynthesis; L-leucine biosynthesis; L-leucine from 3-methyl-2-oxobutanoate: step 1/4. Functionally, catalyzes the condensation of the acetyl group of acetyl-CoA with 3-methyl-2-oxobutanoate (2-ketoisovalerate) to form 3-carboxy-3-hydroxy-4-methylpentanoate (2-isopropylmalate). The sequence is that of 2-isopropylmalate synthase from Methylibium petroleiphilum (strain ATCC BAA-1232 / LMG 22953 / PM1).